A 156-amino-acid chain; its full sequence is Small ribosomal subunit protein uS7 (156 aa).

It belongs to the universal ribosomal protein uS7 family. As to quaternary structure, part of the 30S ribosomal subunit. Contacts proteins S9 and S11.

One of the primary rRNA binding proteins, it binds directly to 16S rRNA where it nucleates assembly of the head domain of the 30S subunit. Is located at the subunit interface close to the decoding center, probably blocks exit of the E-site tRNA. The sequence is that of Small ribosomal subunit protein uS7 from Nostoc punctiforme (strain ATCC 29133 / PCC 73102).